A 1093-amino-acid chain; its full sequence is NACHT, LRR and PYD domains-containing protein 14 (1093 aa).

Residues 1–97 (MADSSSSSFF…CERAKEEINW (97 aa)) enclose the Pyrin domain. Positions 102–121 (IGPDDAKAGETQEDQEAVLG) are disordered. Positions 177-499 (QIVVLQGAAG…MFYMLKGSWE (323 aa)) constitute an NACHT domain. Residue 183–190 (GAAGVGKT) participates in ATP binding. 11 LRR repeats span residues 730 to 750 (NLMHLDLKGSDIGDNGVKSLC), 759 to 780 (KLQTLRLESCNLTVFCCLNISN), 787 to 807 (SLIFLNLSTNNLLDDGVQLLC), 816 to 836 (YLERLSLESCGLTEAGCEYLS), 844 to 864 (RLTHLCLADNVLGDGGVKLMS), 873 to 894 (TLKSLVLRRCHFTSLSSEYLST), 901 to 921 (SLTHLDLGSNWLQDNGVKLLC), 930 to 951 (NLQDLELMGCVLTNACCLDLAS), 958 to 978 (NLRSLDLGNNDLQDDGVKILC), 987 to 1008 (NIQRLGLEYCGLTSLCCQDLSS), and 1015 to 1035 (RLIKMNLTQNTLGYEGIVKLY).

Belongs to the NLRP family. As to expression, testis-specific.

The protein localises to the cytoplasm. In terms of biological role, may be involved in inflammation and spermatogenesis. This chain is NACHT, LRR and PYD domains-containing protein 14 (NLRP14), found in Homo sapiens (Human).